Here is a 1544-residue protein sequence, read N- to C-terminus: Rho guanine nucleotide exchange factor 12 (1544 aa).

A disordered region spans residues 1–62 (MSGTQSTITD…KTKSSSEESR (62 aa)). An N-acetylserine modification is found at S2. A compositionally biased stretch (basic and acidic residues) spans 28-45 (SPTDKKQKVERIASHDFD). S41 carries the phosphoserine modification. The PDZ domain maps to 72 to 151 (CVIIQKDDNG…LTVQGRPPGS (80 aa)). Positions 194 to 262 (MGEENNVVHN…LSKATGSAQD (69 aa)) form a coiled coil. The tract at residues 247–346 (PQLQEQLSKA…SLVGSPSTRI (100 aa)) is disordered. 2 stretches are compositionally biased toward polar residues: residues 249-260 (LQEQLSKATGSA) and 293-309 (DCSSGDASRPSSDNADS). The residue at position 309 (S309) is a Phosphoserine. Positions 313–329 (GPKERIYLEENPEKSET) are enriched in basic and acidic residues. The span at 330 to 344 (IQDTDTQSLVGSPST) shows a compositional bias: polar residues. The residue at position 341 (S341) is a Phosphoserine. The region spanning 367-558 (GQCSCFQSIE…LMYMKHLGVK (192 aa)) is the RGSL domain. The tract at residues 570–706 (GRIGFLPKIK…GDTLDGTPRT (137 aa)) is disordered. Basic and acidic residues predominate over residues 582–592 (MKKDKEGEEKG). Over residues 631 to 640 (STPSSVSPEP) the composition is skewed to polar residues. Position 637 is a phosphoserine (S637). Low complexity predominate over residues 663 to 676 (ANSMSSVASGASFS). Phosphothreonine is present on T736. The DH domain occupies 787-977 (KRQEVINELF…RQILNYVNQA (191 aa)). The 114-residue stretch at 1019–1132 (KMIHEGPLVW…WQDLICRMAA (114 aa)) folds into the PH domain. Positions 1138–1149 (STKPIPLPQSTP) are enriched in polar residues. The tract at residues 1138–1179 (STKPIPLPQSTPGEGDNDEEDPSKLKEEQHGISVTGLQSPDR) is disordered. S1288, S1327, S1377, S1457, and S1541 each carry phosphoserine.

Interacts with GNA12 and GNA13, probably through the RGS-like domain. Interacts with RHOA, PLXNB1 and PLXNB2. Interacts through its PDZ domain with IGF1R beta subunit. Interacts with GCSAM. Found in a complex with ARHGEF11 and ARHGEF12; binding to ARHGEF11 and ARHGEF12 enhances CDC42 GEF activity of PLEKHG4B, and PLEKHG4B, in turn, inhibits ARHGEF11- and ARHGEF12-mediated RHOA activation. As to expression, ubiquitously expressed. Isoform 2 is found in jejunum and testis.

The protein resides in the cytoplasm. It localises to the membrane. May play a role in the regulation of RhoA GTPase by guanine nucleotide-binding alpha-12 (GNA12) and alpha-13 (GNA13). Acts as guanine nucleotide exchange factor (GEF) for RhoA GTPase and may act as GTPase-activating protein (GAP) for GNA12 and GNA13. The chain is Rho guanine nucleotide exchange factor 12 (ARHGEF12) from Homo sapiens (Human).